The following is a 340-amino-acid chain: Ribose-phosphate pyrophosphokinase (340 aa).

Residues 47–49 and 106–107 each bind ATP; these read NGE and RQ. Histidine 140 and aspartate 182 together coordinate Mg(2+). Lysine 206 is a catalytic residue. D-ribose 5-phosphate contacts are provided by residues arginine 208, aspartate 234, and 238-242; that span reads DTAGT.

The protein belongs to the ribose-phosphate pyrophosphokinase family. Class I subfamily. In terms of assembly, homohexamer. Requires Mg(2+) as cofactor.

It is found in the cytoplasm. The catalysed reaction is D-ribose 5-phosphate + ATP = 5-phospho-alpha-D-ribose 1-diphosphate + AMP + H(+). Its pathway is metabolic intermediate biosynthesis; 5-phospho-alpha-D-ribose 1-diphosphate biosynthesis; 5-phospho-alpha-D-ribose 1-diphosphate from D-ribose 5-phosphate (route I): step 1/1. In terms of biological role, involved in the biosynthesis of the central metabolite phospho-alpha-D-ribosyl-1-pyrophosphate (PRPP) via the transfer of pyrophosphoryl group from ATP to 1-hydroxyl of ribose-5-phosphate (Rib-5-P). This chain is Ribose-phosphate pyrophosphokinase, found in Bifidobacterium longum (strain NCC 2705).